Here is a 323-residue protein sequence, read N- to C-terminus: MKNFAYLNGPKVVVIGGGTGLSTMLRGLKKYTHNITAIVTVADDGGGSGVLREDLGMLPPGDIRNCILALRNTEPTMEKLLQYRFTDGMLKGQSFGNLFLAAMNGISISFEEAVKKMSEVLAVSGKVLPVTLDDVKLKAKLKNGIVIDGESLIPKLQMKEKSPIERIFLEPKDAKPVKEALIDIMDADEIILGPGSLYTSIIPNLLVNDVCEAIEDSKAIKVYVCNIMTQPGETIGYDANAHVDALFLHGLKSLDYVIVNNGEIPYEYKDRYKEDMSQPVSYDVESFKQKGIKVIEKDVLAIRNNYIRHDEQKLAEILMGLLE.

It belongs to the gluconeogenesis factor family.

It localises to the cytoplasm. Required for morphogenesis under gluconeogenic growth conditions. This is Putative gluconeogenesis factor from Thermoanaerobacterium thermosulfurigenes (Clostridium thermosulfurogenes).